Reading from the N-terminus, the 281-residue chain is Protein DOG1-like 1 (281 aa).

Positions 9–265 constitute a DOG1 domain; sequence EKLQQDCYNE…HEWGKSREHR (257 aa). The disordered stretch occupies residues 262 to 281; the sequence is REHRRLEASGGDSGGNVTRE.

This chain is Protein DOG1-like 1, found in Arabidopsis thaliana (Mouse-ear cress).